Reading from the N-terminus, the 528-residue chain is Protein arginine N-methyltransferase 3 (528 aa).

The interval 1–43 (MCSLAAGNGRGAELGPEPLELSDSGDDAGWEDEDADTEPAHGR) is disordered. Cys2 carries the post-translational modification N-acetylcysteine. Phosphoserine is present on residues Ser22 and Ser24. The segment covering 23–37 (DSGDDAGWEDEDADT) has biased composition (acidic residues). Residues 46-69 (TPCLFCDRLFASAEETFSHCKLEH) form a C2H2-type zinc finger. Residue Ser169 is modified to Phosphoserine. A mediates interaction with ALDH1A1 region spans residues 184-528 (MKQFAQDFVM…NSSTQTYSLQ (345 aa)). An SAM-dependent MTase PRMT-type domain is found at 214 to 528 (DGVYFSSYGH…NSSTQTYSLQ (315 aa)). Arg236, Gly260, Asp282, Ser284, Ile310, and Glu311 together coordinate S-adenosyl-L-homocysteine. Residues Glu326 and Glu335 contribute to the active site.

It belongs to the class I-like SAM-binding methyltransferase superfamily. Protein arginine N-methyltransferase family. Monomer and homodimer. Interacts with EPB41L3 (via FERM domain); the interaction is direct and inhibits the protein-arginine N-methyltransferase activity of PRMT3. Interacts with the 40S ribosomal protein RPS2. Interacts with ALDH1A1; the interaction is direct, inhibits ALDH1A1 aldehyde dehydrogenase activity and is independent of the methyltransferase activity of PRMT3.

It localises to the cytoplasm. The protein resides in the cytosol. Its subcellular location is the nucleus. It catalyses the reaction L-arginyl-[protein] + S-adenosyl-L-methionine = N(omega)-methyl-L-arginyl-[protein] + S-adenosyl-L-homocysteine + H(+). It carries out the reaction L-arginyl-[protein] + 2 S-adenosyl-L-methionine = N(omega),N(omega)-dimethyl-L-arginyl-[protein] + 2 S-adenosyl-L-homocysteine + 2 H(+). Inhibited by N-ethylmaleimide and high concentrations of zinc chloride. Its function is as follows. Protein-arginine N-methyltransferase that catalyzes both the monomethylation and asymmetric dimethylation of the guanidino nitrogens of arginine residues in target proteins, and therefore falls into the group of type I methyltransferases. Catalyzes the asymmetric arginine dimethylation at multiple sites in the Arg/Gly-rich region of small ribosomal subunit protein uS5/RPS2. Also appears to methylate other ribosomal proteins. May regulate retinoic acid synthesis and signaling by inhibiting ALDH1A1 retinal dehydrogenase activity. Contributes to methylation of histone H4 'Arg-3', a specific tag for epigenetic transcriptional activation. Promotes osteogenesis. This Mus musculus (Mouse) protein is Protein arginine N-methyltransferase 3.